The following is a 161-amino-acid chain: MPLYETVFIARNDVSQQQVEAVADGIAALLETDGGAVKKREYWGLRSLAYRIKKNRKGHYMLLGLDAKPETIKEIERQLGLNEDVMRVLTLRVDEIDEAPSVILSRKGDERERGFRGPKPAGRFESGRGGAGGARRGYDDREEFRARNEREDGRDTDGEAE.

The tract at residues Lys107–Glu161 is disordered. Positions Arg136–Glu161 are enriched in basic and acidic residues.

Belongs to the bacterial ribosomal protein bS6 family.

Binds together with bS18 to 16S ribosomal RNA. This Gluconacetobacter diazotrophicus (strain ATCC 49037 / DSM 5601 / CCUG 37298 / CIP 103539 / LMG 7603 / PAl5) protein is Small ribosomal subunit protein bS6.